We begin with the raw amino-acid sequence, 477 residues long: Asparaginyl-tRNA synthetase (477 aa).

Residues 1 to 14 constitute a mitochondrion transit peptide; the sequence is MLGARRLLGALRLC. Lys-353 is modified (N6-acetyllysine).

Belongs to the class-II aminoacyl-tRNA synthetase family. As to quaternary structure, homodimer. In terms of tissue distribution, expressed in brain and inner ear, including the cochlear epithelium and organ of Corti.

The protein resides in the mitochondrion matrix. It is found in the mitochondrion. It catalyses the reaction tRNA(Asn) + L-asparagine + ATP = L-asparaginyl-tRNA(Asn) + AMP + diphosphate + H(+). Its function is as follows. Mitochondrial aminoacyl-tRNA synthetase that catalyzes the specific attachment of the asparagine amino acid (aa) to the homologous transfer RNA (tRNA), further participating in protein synthesis. The reaction occurs in a two steps: asparagine is first activated by ATP to form Asn-AMP and then transferred to the acceptor end of tRNA(Asn). In Mus musculus (Mouse), this protein is Asparaginyl-tRNA synthetase.